The sequence spans 177 residues: Adenine phosphoribosyltransferase (177 aa).

This sequence belongs to the purine/pyrimidine phosphoribosyltransferase family. As to quaternary structure, homodimer.

The protein resides in the cytoplasm. It carries out the reaction AMP + diphosphate = 5-phospho-alpha-D-ribose 1-diphosphate + adenine. It participates in purine metabolism; AMP biosynthesis via salvage pathway; AMP from adenine: step 1/1. In terms of biological role, catalyzes a salvage reaction resulting in the formation of AMP, that is energically less costly than de novo synthesis. The polypeptide is Adenine phosphoribosyltransferase (Leptospira biflexa serovar Patoc (strain Patoc 1 / Ames)).